We begin with the raw amino-acid sequence, 135 residues long: Large ribosomal subunit protein uL16c (135 aa).

The protein belongs to the universal ribosomal protein uL16 family. As to quaternary structure, part of the 50S ribosomal subunit.

It localises to the plastid. The protein localises to the chloroplast. The chain is Large ribosomal subunit protein uL16c from Ranunculus macranthus (Large buttercup).